Here is a 214-residue protein sequence, read N- to C-terminus: Type 4 apparatus protein DotN (214 aa).

Zn(2+) contacts are provided by Cys52, Cys55, Cys84, and Cys87.

As to quaternary structure, the T4BSS is a complex nanomachine composed of several subcomplexes. This subunit is part of the Type IV Coupling Complex (T4CC), a subcomplex composed of the DotLMNYZ core and the IcmSW-LvgA adapter subunits, linked by the C-terminal tail of DotL. Six DotLMNYZ hetero-pentameric units may assemble into a hexameric nanomachine, forming an inner membrane channel for effectors to pass through. Interacts directly with DotL. Interacts with DotZ.

The protein resides in the cytoplasm. Functionally, component of the Dot/Icm type IVB secretion system (T4BSS), which is used to inject bacterial effector proteins into eukaryotic host cells. Part of a subcomplex which recruits effector proteins and delivers them to the core transmembrane subcomplex. This is Type 4 apparatus protein DotN from Legionella pneumophila subsp. pneumophila (strain Philadelphia 1 / ATCC 33152 / DSM 7513).